The primary structure comprises 505 residues: MDLLLLEKTLLGLFLAAVVAIVVSKLRGKRFKLPPGPLPVPIFGNWLQVGDDLNHRNLTQLAKRFGDIFLLRMGQRNLVVVSSPDLAKEVLHTQGVEFGSRTRNVVFDIFTGEGQDMVFTVYGEHWRKMRRIMTVPFFTNKVVQQYRHGWEAEAAAVVDDVRKNPDAAVSGLVIRRRLQLMMYNNMYRIMFDRRFESEEDPLFQRLKALNGERSRLAQSFEYNYGDFIPILRPFLKGYLKICKEVKETRLKLFKDYFVDERKNIGSTKSTNNEGLKCAIDHILDAEKKGEINEDNVLYIVENINVAAIETTLWSIEWGIAELVNHPEIQQKVRDEIDRVLGVGHQVTEPDIQKLPYLQAVVKETLRLRMAIPLLVPHMNLHDAKLGGYDIPAESKILVNAWWLANNPAHWKKPEEFRPERFFEEESHVEANGNDFRYLPFGVGRRSCPGIILALPILGITLGRLVQNFELLPPPGQSQIDTSEKGGQFSLHILKHSTVVAKPRSF.

The chain crosses the membrane as a helical span at residues 3–23 (LLLLEKTLLGLFLAAVVAIVV). (E)-cinnamate-binding positions include 213–218 (RSRLAQ) and alanine 306. Residue cysteine 447 participates in heme binding.

It belongs to the cytochrome P450 family. Heme is required as a cofactor.

Its subcellular location is the membrane. The enzyme catalyses (E)-cinnamate + reduced [NADPH--hemoprotein reductase] + O2 = (E)-4-coumarate + oxidized [NADPH--hemoprotein reductase] + H2O + H(+). It participates in phenylpropanoid metabolism; trans-4-coumarate biosynthesis; trans-4-coumarate from trans-cinnamate: step 1/1. Functionally, catalyzes the first oxidative step of the phenylpropanoid pathway in higher plants by transforming trans-cinnamate into p-coumarate. The compounds formed by this pathway are essential components for lignification, pollination, and defense against ultraviolet light, predators and pathogens. This Vigna radiata var. radiata (Mung bean) protein is Trans-cinnamate 4-monooxygenase (CYP73A2).